Reading from the N-terminus, the 326-residue chain is 4-hydroxythreonine-4-phosphate dehydrogenase (326 aa).

A substrate-binding site is contributed by Thr-132. 3 residues coordinate a divalent metal cation: His-160, His-205, and His-260. Positions 268, 277, and 286 each coordinate substrate.

This sequence belongs to the PdxA family. Homodimer. Zn(2+) is required as a cofactor. The cofactor is Mg(2+). Co(2+) serves as cofactor.

The protein localises to the cytoplasm. The catalysed reaction is 4-(phosphooxy)-L-threonine + NAD(+) = 3-amino-2-oxopropyl phosphate + CO2 + NADH. It participates in cofactor biosynthesis; pyridoxine 5'-phosphate biosynthesis; pyridoxine 5'-phosphate from D-erythrose 4-phosphate: step 4/5. Its function is as follows. Catalyzes the NAD(P)-dependent oxidation of 4-(phosphooxy)-L-threonine (HTP) into 2-amino-3-oxo-4-(phosphooxy)butyric acid which spontaneously decarboxylates to form 3-amino-2-oxopropyl phosphate (AHAP). In Stenotrophomonas maltophilia (strain K279a), this protein is 4-hydroxythreonine-4-phosphate dehydrogenase.